Reading from the N-terminus, the 179-residue chain is Large ribosomal subunit protein uL5 (179 aa).

This sequence belongs to the universal ribosomal protein uL5 family. Part of the 50S ribosomal subunit; part of the 5S rRNA/L5/L18/L25 subcomplex. Contacts the 5S rRNA and the P site tRNA. Forms a bridge to the 30S subunit in the 70S ribosome.

This is one of the proteins that bind and probably mediate the attachment of the 5S RNA into the large ribosomal subunit, where it forms part of the central protuberance. In the 70S ribosome it contacts protein S13 of the 30S subunit (bridge B1b), connecting the 2 subunits; this bridge is implicated in subunit movement. Contacts the P site tRNA; the 5S rRNA and some of its associated proteins might help stabilize positioning of ribosome-bound tRNAs. The sequence is that of Large ribosomal subunit protein uL5 from Herpetosiphon aurantiacus (strain ATCC 23779 / DSM 785 / 114-95).